The sequence spans 148 residues: SsrA-binding protein (148 aa).

This sequence belongs to the SmpB family.

The protein resides in the cytoplasm. Required for rescue of stalled ribosomes mediated by trans-translation. Binds to transfer-messenger RNA (tmRNA), required for stable association of tmRNA with ribosomes. tmRNA and SmpB together mimic tRNA shape, replacing the anticodon stem-loop with SmpB. tmRNA is encoded by the ssrA gene; the 2 termini fold to resemble tRNA(Ala) and it encodes a 'tag peptide', a short internal open reading frame. During trans-translation Ala-aminoacylated tmRNA acts like a tRNA, entering the A-site of stalled ribosomes, displacing the stalled mRNA. The ribosome then switches to translate the ORF on the tmRNA; the nascent peptide is terminated with the 'tag peptide' encoded by the tmRNA and targeted for degradation. The ribosome is freed to recommence translation, which seems to be the essential function of trans-translation. The polypeptide is SsrA-binding protein (Ehrlichia canis (strain Jake)).